The chain runs to 373 residues: MATSASSHLSKAIKHMYMKLPQGEKVQAMYIWIDGTGEHLRCKTRTLDHEPKSLEDLPEWNFDGSSTFQAEGSNSDMYLRPAAMFRDPFRKDPNKLVLCEVFKYNRQSADTNLRHTCRRIMDMVSNQHPWFGMEQEYTLLGTDGHPFGWPSNCFPGPQGPYYCGVGADKAYGRDIVEAHYRACLYAGVKIGGTNAEVMPAQWEFQVGPCEGIEMGDHLWIARFILHRVCEDFGVIVSFDPKPIPGNWNGAGCHTNFSTKNMREDGGLKHIEEAIEKLSKRHQYHIRAYDPKGGLDNARRLTGFHETSSIHEFSAGVANRGASIRIPRNVGHEKKGYFEDRGPSANCDPYAVTEALVRTCLLNETGDEPFEYKN.

A GS beta-grasp domain is found at 24–106; sequence EKVQAMYIWI…VLCEVFKYNR (83 aa). Residues 113-373 enclose the GS catalytic domain; it reads LRHTCRRIMD…TGDEPFEYKN (261 aa). Glu134 contacts ATP. Mn(2+) is bound by residues Glu134, Glu136, Glu196, and Glu203. 203-208 serves as a coordination point for ATP; sequence EFQVGP. An L-glutamate-binding site is contributed by 246–247; the sequence is NW. His253 contributes to the Mn(2+) binding site. Residues 255–257, Arg319, and Arg324 contribute to the ATP site; that span reads NFS. Arg319 lines the L-glutamate pocket. An ADP-binding site is contributed by 336 to 338; sequence YFE. Glu338 provides a ligand contact to Mn(2+). Arg340 serves as a coordination point for L-glutamate.

It belongs to the glutamine synthetase family. As to quaternary structure, homooctamer and homotetramer. Biotin serves as cofactor. Requires Mg(2+) as cofactor. Mn(2+) is required as a cofactor. In terms of tissue distribution, expressed in retina, brain and liver. Little or no detectable expression in breast muscle, pancreas and spleen.

Its subcellular location is the cytoplasm. The protein localises to the mitochondrion. It catalyses the reaction L-glutamate + NH4(+) + ATP = L-glutamine + ADP + phosphate + H(+). The catalysed reaction is L-glutamate + H(+) = 4-aminobutanoate + CO2. With respect to regulation, glutamate to glutamine ratio influences catalytic activity. At glutamate to glutamine ratios greater than 4, decarboxylase activity ceases. In the presence of manganese, synthetase activity is limited to concentrations between 10 mM and 20 mM, whereas decarboxylase activity is not affected. Both catalytic activities are inhibited by avidin. Glutamine synthetase that catalyzes the ATP-dependent conversion of glutamate and ammonia to glutamine. When expressed in liver, it may be involved in detoxifying intramitochondrially generated ammonia. Also acts as glutamate decarboxylase by catalyzing the production of 4-aminobutanoate (gamma-aminobutyric acid, GABA) in a pyridoxal phosphate-independent manner. The sequence is that of Glutamine synthetase from Gallus gallus (Chicken).